The following is a 159-amino-acid chain: 2-C-methyl-D-erythritol 2,4-cyclodiphosphate synthase (159 aa).

Positions 10 and 12 each coordinate a divalent metal cation. Residues 10–12 (DVH) and 36–37 (HS) contribute to the 4-CDP-2-C-methyl-D-erythritol 2-phosphate site. His-44 contacts a divalent metal cation. Residues 58-60 (DIG), 134-137 (TTSE), Phe-141, and Arg-144 contribute to the 4-CDP-2-C-methyl-D-erythritol 2-phosphate site.

This sequence belongs to the IspF family. As to quaternary structure, homotrimer. Requires a divalent metal cation as cofactor.

It carries out the reaction 4-CDP-2-C-methyl-D-erythritol 2-phosphate = 2-C-methyl-D-erythritol 2,4-cyclic diphosphate + CMP. It participates in isoprenoid biosynthesis; isopentenyl diphosphate biosynthesis via DXP pathway; isopentenyl diphosphate from 1-deoxy-D-xylulose 5-phosphate: step 4/6. Its function is as follows. Involved in the biosynthesis of isopentenyl diphosphate (IPP) and dimethylallyl diphosphate (DMAPP), two major building blocks of isoprenoid compounds. Catalyzes the conversion of 4-diphosphocytidyl-2-C-methyl-D-erythritol 2-phosphate (CDP-ME2P) to 2-C-methyl-D-erythritol 2,4-cyclodiphosphate (ME-CPP) with a corresponding release of cytidine 5-monophosphate (CMP). This Roseobacter denitrificans (strain ATCC 33942 / OCh 114) (Erythrobacter sp. (strain OCh 114)) protein is 2-C-methyl-D-erythritol 2,4-cyclodiphosphate synthase.